Consider the following 720-residue polypeptide: MELRKDKLLMFYSEGKESKEAKWAVNDPMSKSYKLSLPSALRPDNLLPGNRLRYTDASKSKSSKVSWYKTILDPGSEIVLKWNWVFIVSCMVALFIDPLYFFVPAIGGDKNYPCARTDTSLSILVTFFRTIADLFYLLHIFIKFRTGFIAPNSSTRVFGRGELVMDPKAIAWRYIKSDFIIDLIATLPLPQIVIWFVISTTKSYRFDHNNNAIALIVLLQYIPRFYLIIPLSSQIVKATGVVTKTAWAGAAYNLLLYMLASHVLGAAWYILSVDRYTSCWKSRCNGEAGQVNCQLYYLDCDSMYDNNQMTWANVTKVFKLCDARNGEFKYGIFGNAITKNVVSSQFFERYFYCLWWGLQQLSSYGQNLSTTMFMGETTFAVLIAIFGLVLFAHLIGNMQTYLQSLTVRLEEWRLKKRDTEEWMRHRQLPEELRNRVRRYEQYKWLATRGVDEEVLLQSLPTDLRRDIQRHLCLDLVRRVPFFSQMDDQLLDAICERLVSSLCTEGTYLVREGDLISEMLFIIRGRLESSTTNGGRTGFFNSIILRPGDFCGEELLSWALLPKSTLNLPSSTRTVRALVEVEAFALRAEDLKFVANQFRRLHSKKLQHTFRFYSHHWRTWAACFIQAAWRRYKRRVMENNLTAIESMENEEGEVGEELVVVEEEECVEESPRTKMNLGVMVLASRFAANTRRGVAAQRVKDVELPRFKKPEEPDFSAEHDD.

Over 1-85 the chain is Cytoplasmic; the sequence is MELRKDKLLM…SEIVLKWNWV (85 aa). Residues 86–106 form a helical membrane-spanning segment; sequence FIVSCMVALFIDPLYFFVPAI. Residues 107–121 lie on the Extracellular side of the membrane; it reads GGDKNYPCARTDTSL. Residues 122–142 form a helical membrane-spanning segment; sequence SILVTFFRTIADLFYLLHIFI. The Cytoplasmic segment spans residues 143 to 178; that stretch reads KFRTGFIAPNSSTRVFGRGELVMDPKAIAWRYIKSD. The helical transmembrane segment at 179–199 threads the bilayer; it reads FIIDLIATLPLPQIVIWFVIS. The Extracellular portion of the chain corresponds to 200–211; that stretch reads TTKSYRFDHNNN. The helical transmembrane segment at 212–232 threads the bilayer; it reads AIALIVLLQYIPRFYLIIPLS. The Cytoplasmic segment spans residues 233–252; that stretch reads SQIVKATGVVTKTAWAGAAY. Residues 253–273 traverse the membrane as a helical segment; the sequence is NLLLYMLASHVLGAAWYILSV. Residues 274–377 are Extracellular-facing; the sequence is DRYTSCWKSR…LSTTMFMGET (104 aa). The helical transmembrane segment at 378–398 threads the bilayer; it reads TFAVLIAIFGLVLFAHLIGNM. The Cytoplasmic portion of the chain corresponds to 399–720; the sequence is QTYLQSLTVR…EPDFSAEHDD (322 aa). Residues 481-605 and glutamate 552 each bind a nucleoside 3',5'-cyclic phosphate; that span reads FFSQ…SKKL. The interval 597–612 is calmodulin-binding; the sequence is FRRLHSKKLQHTFRFY. One can recognise an IQ domain in the interval 617 to 646; the sequence is RTWAACFIQAAWRRYKRRVMENNLTAIESM.

Belongs to the cyclic nucleotide-gated cation channel (TC 1.A.1.5) family. In terms of assembly, homotetramer or heterotetramer. Part of a functional complex containing PSKR1, BAK1, CNGC17, and AHA. Interacts with AHA1, AHA2, and BAK1, but not with PSKR1 or BRI1.

It localises to the cell membrane. Probable cyclic nucleotide-gated ion channel. Forms a functional cation-translocating unit with AHAs that is activated by PSKR1/BAK1 and possibly other BAK1/RLK complexes. Required for PSK-induced protoplast expansion. This is Cyclic nucleotide-gated ion channel 17 from Arabidopsis thaliana (Mouse-ear cress).